The chain runs to 460 residues: NADH-quinone oxidoreductase subunit N (460 aa).

Helical transmembrane passes span 2–22, 28–48, 65–85, 104–124, 155–175, 196–216, 230–250, 263–283, 292–312, 321–341, 363–383, 400–420, and 438–458; these read LLPE…AVML, IVAN…LKYS, ANIA…MIIY, ILLS…LLLF, FILG…IYGF, LGLV…LSSA, PIAS…AILL, ISYN…ALGA, LMAY…LLRT, LYML…IMLL, IAAA…LAGF, LLAY…LKII, and YGLL…SFII.

Belongs to the complex I subunit 2 family. As to quaternary structure, NDH-1 is composed of 14 different subunits. Subunits NuoA, H, J, K, L, M, N constitute the membrane sector of the complex.

The protein resides in the cell inner membrane. The enzyme catalyses a quinone + NADH + 5 H(+)(in) = a quinol + NAD(+) + 4 H(+)(out). Functionally, NDH-1 shuttles electrons from NADH, via FMN and iron-sulfur (Fe-S) centers, to quinones in the respiratory chain. The immediate electron acceptor for the enzyme in this species is believed to be ubiquinone. Couples the redox reaction to proton translocation (for every two electrons transferred, four hydrogen ions are translocated across the cytoplasmic membrane), and thus conserves the redox energy in a proton gradient. This chain is NADH-quinone oxidoreductase subunit N, found in Rickettsia bellii (strain RML369-C).